A 296-amino-acid polypeptide reads, in one-letter code: Enoyl-CoA hydratase domain-containing protein 2, mitochondrial (296 aa).

The residue at position 101 (Lys101) is an N6-acetyllysine; alternate. At Lys101 the chain carries N6-succinyllysine; alternate.

This sequence belongs to the enoyl-CoA hydratase/isomerase family.

Its subcellular location is the mitochondrion. This is Enoyl-CoA hydratase domain-containing protein 2, mitochondrial (ECHDC2) from Bos taurus (Bovine).